A 719-amino-acid chain; its full sequence is MAKLIIINSEKGEKVETHEDIFKLSNLQQREIYAITNERTKSILLNQTFYTILDIENEPKDKVAFDSYNSLFPTSIFSYSRQDRLFGTCNHVLDNNIHYSFALFDSMVDNLSTYLPNDWNIIKISDSIDYPIGNDLLFYVFDNLVHMTIDQFVNSEEKQMNTVPKCKESQDKIKEVFTDIMSHLYMPAIDYDPQSYNYRVSRREIGNLVRDQVFSLVKGHIHLIGPEMESLRNIIMFLHAGNSITFHTIDTSTKSSYIKELEFNKKTKLTMASVLVNQRKNMNNFFKGLIRHYITYGIPRKVYYIGAYPSYWLELITWVPFNIVAYDPKYRRVDNDKIIWYDRLFDRNDIETIESKSYIYIDIRTDVRNLDTTKKQRIFKEEDDMIVDMAIKLASKQCTVMFKRKIFPGNNMSFGDPLFHPKLTQLGREYYNCITTIVSPSVYKESELYSLLLSARSNNVSNYVYGGSKFDQFSIVNCNSTVVALYSLSNTVNSLKTIEHAIKYNHIITFPHRTDRGDWRNIEELDNSSPFQNRKRQLEFEDWSIDPKNYVMKFRCEMVSESVFLQLGHSRALIPDLYNHMISLRMEMPLFYSDRFFSHIGIRQPSIFKRDSYMTSRLSAYISRQLTHSINLSVLKRNHFEGYSGHLIAIETSFSSLVFTMSPYRWLIRAKKLLTKNKMRDKFKIGDGQPHTREEFENTYDYLKINRLVNSTFRSLLLD.

This sequence belongs to the rotavirus VP3 family. Interacts with VP1. Interacts with VP2.

It is found in the virion. It carries out the reaction a 5'-end diphospho-ribonucleoside in mRNA + GTP + H(+) = a 5'-end (5'-triphosphoguanosine)-ribonucleoside in mRNA + diphosphate. The catalysed reaction is a 5'-end (5'-triphosphoguanosine)-ribonucleoside in mRNA + S-adenosyl-L-methionine = a 5'-end (N(7)-methyl 5'-triphosphoguanosine)-ribonucleoside in mRNA + S-adenosyl-L-homocysteine. In terms of biological role, multifunctional enzyme involved in mRNA capping. Catalyzes the formation of the 5' cap structure on the viral plus-strand transcripts. Specifically binds to GTP and displays guanylyltransferase and methyltransferase activities. Together with VP1 polymerase, forms an enzyme complex positioned near the channels situated at each of the five-fold vertices of the core. Following infection, the outermost layer of the virus is lost, leaving a double-layered particle (DLP) made up of the core and VP6 shell. VP1 then catalyzes the transcription of fully conservative plus-strand genomic RNAs that are capped by VP3 and extruded through the DLP's channels into the cytoplasm where they function as mRNAs for translation of viral proteins. DLPs probably have an RNA triphosphatase activity as well, whereas open cores don't. This Rotavirus X (strain RVX/Human/China/NADRV-J19/1997/GXP[X]) (RV ADRV-N) protein is Protein VP3.